The primary structure comprises 141 residues: Hemoglobin subunit alpha (141 aa).

One can recognise a Globin domain in the interval 1-141 (VLSPADKTNV…VSTVLTSKYR (141 aa)). Ser-3 is modified (phosphoserine). The residue at position 7 (Lys-7) is an N6-succinyllysine. Thr-8 bears the Phosphothreonine mark. Lys-11 carries the N6-succinyllysine modification. Lys-16 carries the post-translational modification N6-acetyllysine; alternate. Lys-16 carries the post-translational modification N6-succinyllysine; alternate. Tyr-24 is modified (phosphotyrosine). Residue Lys-40 is modified to N6-succinyllysine. Ser-49 is modified (phosphoserine). His-58 contributes to the O2 binding site. His-87 serves as a coordination point for heme b. Position 102 is a phosphoserine (Ser-102). Thr-108 is subject to Phosphothreonine. Phosphoserine is present on Ser-124. Thr-134 and Thr-137 each carry phosphothreonine. Ser-138 carries the phosphoserine modification.

This sequence belongs to the globin family. As to quaternary structure, heterotetramer of two alpha chains and two beta chains. Red blood cells.

Functionally, involved in oxygen transport from the lung to the various peripheral tissues. Its function is as follows. Hemopressin acts as an antagonist peptide of the cannabinoid receptor CNR1. Hemopressin-binding efficiently blocks cannabinoid receptor CNR1 and subsequent signaling. This Phoca vitulina (Harbor seal) protein is Hemoglobin subunit alpha (HBA).